We begin with the raw amino-acid sequence, 409 residues long: NADH-quinone oxidoreductase subunit D (409 aa).

This sequence belongs to the complex I 49 kDa subunit family. In terms of assembly, NDH-1 is composed of 14 different subunits. Subunits NuoB, C, D, E, F, and G constitute the peripheral sector of the complex.

The protein localises to the cell inner membrane. It carries out the reaction a quinone + NADH + 5 H(+)(in) = a quinol + NAD(+) + 4 H(+)(out). Its function is as follows. NDH-1 shuttles electrons from NADH, via FMN and iron-sulfur (Fe-S) centers, to quinones in the respiratory chain. The immediate electron acceptor for the enzyme in this species is believed to be ubiquinone. Couples the redox reaction to proton translocation (for every two electrons transferred, four hydrogen ions are translocated across the cytoplasmic membrane), and thus conserves the redox energy in a proton gradient. The chain is NADH-quinone oxidoreductase subunit D from Campylobacter concisus (strain 13826).